The primary structure comprises 643 residues: CCR4-associated factor 4 (643 aa).

The tract at residues 1 to 274 (MGSGDTRGES…AISSLCDVES (274 aa)) is required for interaction with FIS1 and MDV1. Residues 74-126 (FQNNYADSATTFRILAHLDEQRYPLPNGAAEKNLPSLFEGFKATVSIIQQRLL) are sufficient for interaction with FIS1. Residues 160-255 (DLTHLLEDVE…KQMEEERSSE (96 aa)) are a coiled coil. Residues 243–254 (SLRKQMEEERSS) show a composition bias toward basic and acidic residues. The disordered stretch occupies residues 243–262 (SLRKQMEEERSSEASSFTQN). WD repeat units follow at residues 317–357 (EHGN…QVGE), 360–400 (GHLA…EIYL), 422–461 (LHKD…QQLD), 479–526 (NNGA…RLLE), 527–566 (GHTD…DVIA), 568–603 (DLPV…HWMT), and 614–643 (ELSR…VWTL).

This sequence belongs to the WD repeat MDV1/CAF4 family. In terms of assembly, interacts with DNM1, FIS1 and MDV1, components of the mitochondrial fission machinery. Interacts via its WD repeats with DNM1. Interacts with CCR4 and NOT1, components of the CCR4-NOT complex. It is however not a component of the 1.0 MDa CCR4-NOT core complex, but appears to be part of a less characterized, 1.9 MDa CCR4-NOT complex. Interacts with DBF2, another likely component of the 1.9 MDa complex. Interacts with SRB9 and SRB10, components of the SRB8-11 complex.

The protein localises to the mitochondrion outer membrane. In terms of biological role, involved in mitochondrial fission. Has a partially redundant function to MDV1 in acting as an adapter protein, binding to FIS1 on the mitochondrial outer membrane and recruiting the dynamin-like GTPase DNM1 to form mitochondrial fission complexes. Plays a key role in determining the polarized localization of those DNM1 clusters that are not immediately involved in the mitochondrial fission process. This Saccharomyces cerevisiae (strain ATCC 204508 / S288c) (Baker's yeast) protein is CCR4-associated factor 4 (CAF4).